The primary structure comprises 312 residues: MTIKRKKVSVIGAGFTGATTAFLLAQKELADVVLVDIPQLENPTKGKALDMLEASPVQGFDANIIGTSDYADTADSDVVIITAGIARKPGMSRDDLVATNSKIMKSVTKEIAKHSPDTIIIVLTNPVDAMTYSVFKEAGFPKERVIGQSGVLDTARFRTFIAQELNLSVKDITGFVLGGHGDDMVPLVRYSYAGGIPLETLISKERLDAIVERTRKGGGEIVNLLGNGSAYYAPAASLVEMTEAILKDQRRVLPAIAYLEGEYGYRDLYLGVPVILGGNGIEKVIELELREEEKMALDRSVESVRNVMEILS.

NAD(+) is bound by residues 12–17 (GAGFTG) and D36. R87 and R93 together coordinate substrate. Residues N100 and 123 to 125 (LTN) each bind NAD(+). N125 contacts substrate. Position 149 is a phosphoserine (S149). Residue R156 coordinates substrate. H180 serves as the catalytic Proton acceptor.

It belongs to the LDH/MDH superfamily. MDH type 3 family.

It catalyses the reaction (S)-malate + NAD(+) = oxaloacetate + NADH + H(+). In terms of biological role, catalyzes the reversible oxidation of malate to oxaloacetate. This is Malate dehydrogenase from Bacillus cytotoxicus (strain DSM 22905 / CIP 110041 / 391-98 / NVH 391-98).